The sequence spans 464 residues: Sensor protein IrlS (464 aa).

The Periplasmic segment spans residues 1 to 13; sequence MIRRLLPRTLRAR. The helical transmembrane segment at 14–34 threads the bilayer; that stretch reads LTALIILSTAATLALSGVALY. The Cytoplasmic portion of the chain corresponds to 35–166; sequence SALHNRLVGM…DHALLRAYAY (132 aa). A helical transmembrane segment spans residues 167–187; that stretch reads TVVVIEVLAVVLTAALAYGIA. An HAMP domain is found at 188-241; sequence MLGLSPLRRLVARAEQMSSSRLAQPLPELDTSGELKEMEHAFNAMLKRLDESFV. At 188–464 the chain is on the periplasmic side; it reads MLGLSPLRRL…FWLKFPAHAA (277 aa). Residues 249–463 enclose the Histidine kinase domain; that stretch reads NLAHDMRTPL…TFWLKFPAHA (215 aa). At histidine 252 the chain carries Phosphohistidine; by autocatalysis.

The protein localises to the cell inner membrane. It carries out the reaction ATP + protein L-histidine = ADP + protein N-phospho-L-histidine.. Member of the two-component regulatory system IrlR/IrlS. May be involved in invasion of eukaryotic cells and heavy-metal resistance. Probably activates IrlR by phosphorylation. The sequence is that of Sensor protein IrlS (irlS) from Burkholderia pseudomallei (strain K96243).